The sequence spans 424 residues: Microcin H47 secretion protein MchE (424 aa).

Topologically, residues 1 to 25 (MFRQDALENRKMKWQGRAILLPGIP) are cytoplasmic. Residues 26-46 (LWLIMLGSIVFITAFLMFIIV) form a helical membrane-spanning segment. Residues 47–424 (GTYSRRVNVS…KHSATGPLND (378 aa)) lie on the Periplasmic side of the membrane.

The protein belongs to the membrane fusion protein (MFP) (TC 8.A.1) family.

It localises to the cell inner membrane. Functionally, probably involved, in conjunction with MchF, in the secretion of microcin H47. The protein is Microcin H47 secretion protein MchE (mchE) of Escherichia coli.